A 186-amino-acid chain; its full sequence is Allergen Fel d 4 (186 aa).

The signal sequence occupies residues 1–15 (MKLLLLCLGLILVCA). N-linked (GlcNAc...) asparagine glycans are attached at residues N51 and N66. C81 and C171 are joined by a disulfide.

It belongs to the calycin superfamily. Lipocalin family. As to expression, abundant in urine (at protein level).

It is found in the secreted. May be a pheromone carrier. Acts as a kairomone, detected by the prey vomeronasal organ and inducing fear reactions in mice. The polypeptide is Allergen Fel d 4 (Felis catus (Cat)).